The chain runs to 232 residues: Orotate phosphoribosyltransferase (232 aa).

5-phospho-alpha-D-ribose 1-diphosphate is bound by residues R107, K108, K111, and 133–141 (EDLTTDGGS). Residue T137 coordinates orotate.

It belongs to the purine/pyrimidine phosphoribosyltransferase family. PyrE subfamily. As to quaternary structure, homodimer. Mg(2+) is required as a cofactor.

The catalysed reaction is orotidine 5'-phosphate + diphosphate = orotate + 5-phospho-alpha-D-ribose 1-diphosphate. Its pathway is pyrimidine metabolism; UMP biosynthesis via de novo pathway; UMP from orotate: step 1/2. Functionally, catalyzes the transfer of a ribosyl phosphate group from 5-phosphoribose 1-diphosphate to orotate, leading to the formation of orotidine monophosphate (OMP). The polypeptide is Orotate phosphoribosyltransferase (Cereibacter sphaeroides (strain ATCC 17025 / ATH 2.4.3) (Rhodobacter sphaeroides)).